The primary structure comprises 176 residues: 2-C-methyl-D-erythritol 2,4-cyclodiphosphate synthase (176 aa).

The a divalent metal cation site is built by aspartate 23, histidine 25, and histidine 60. Aspartate 23–histidine 25 provides a ligand contact to 4-CDP-2-C-methyl-D-erythritol 2-phosphate. Position 149–152 (threonine 149–glutamate 152) interacts with 4-CDP-2-C-methyl-D-erythritol 2-phosphate.

The protein belongs to the IspF family. As to quaternary structure, homotrimer. The cofactor is a divalent metal cation.

It catalyses the reaction 4-CDP-2-C-methyl-D-erythritol 2-phosphate = 2-C-methyl-D-erythritol 2,4-cyclic diphosphate + CMP. It participates in isoprenoid biosynthesis; isopentenyl diphosphate biosynthesis via DXP pathway; isopentenyl diphosphate from 1-deoxy-D-xylulose 5-phosphate: step 4/6. Functionally, involved in the biosynthesis of isopentenyl diphosphate (IPP) and dimethylallyl diphosphate (DMAPP), two major building blocks of isoprenoid compounds. Catalyzes the conversion of 4-diphosphocytidyl-2-C-methyl-D-erythritol 2-phosphate (CDP-ME2P) to 2-C-methyl-D-erythritol 2,4-cyclodiphosphate (ME-CPP) with a corresponding release of cytidine 5-monophosphate (CMP). This chain is 2-C-methyl-D-erythritol 2,4-cyclodiphosphate synthase, found in Chlamydia felis (strain Fe/C-56) (Chlamydophila felis).